The chain runs to 74 residues: Small ribosomal subunit protein uS15 (74 aa).

Belongs to the universal ribosomal protein uS15 family. Part of the 30S ribosomal subunit. Forms a bridge to the 50S subunit in the 70S ribosome, contacting the 23S rRNA.

One of the primary rRNA binding proteins, it binds directly to 16S rRNA where it helps nucleate assembly of the platform of the 30S subunit by binding and bridging several RNA helices of the 16S rRNA. Its function is as follows. Forms an intersubunit bridge (bridge B4) with the 23S rRNA of the 50S subunit in the ribosome. The polypeptide is Small ribosomal subunit protein uS15 (Onion yellows phytoplasma (strain OY-M)).